The primary structure comprises 513 residues: ATP synthase subunit alpha (513 aa).

Residue Gly-169 to Thr-176 coordinates ATP.

The protein belongs to the ATPase alpha/beta chains family. As to quaternary structure, F-type ATPases have 2 components, CF(1) - the catalytic core - and CF(0) - the membrane proton channel. CF(1) has five subunits: alpha(3), beta(3), gamma(1), delta(1), epsilon(1). CF(0) has three main subunits: a(1), b(2) and c(9-12). The alpha and beta chains form an alternating ring which encloses part of the gamma chain. CF(1) is attached to CF(0) by a central stalk formed by the gamma and epsilon chains, while a peripheral stalk is formed by the delta and b chains.

It is found in the cell inner membrane. It catalyses the reaction ATP + H2O + 4 H(+)(in) = ADP + phosphate + 5 H(+)(out). Produces ATP from ADP in the presence of a proton gradient across the membrane. The alpha chain is a regulatory subunit. This chain is ATP synthase subunit alpha, found in Francisella philomiragia subsp. philomiragia (strain ATCC 25017 / CCUG 19701 / FSC 153 / O#319-036).